Reading from the N-terminus, the 812-residue chain is MYEGKHIHFSEVDNKPLCSYSPKLCKQRRLNGYAFCIRHVLEDKTAPFKQCEYVAKYNSQRCTNPIPKSEDRRYCNSHLQVLGFIPKKERKKKNDALEDVKTKHQMETMAFSLTVPPLALKMPNGHDGLNLSPPGARLPIHYLETDLEDPFSFEEEEEELKKGTSVKKKLQSKLAQNWQRLRETEIVNVHQEHFSPHPAHSPLQSPSLQEQHTLVQPISTLPKPTGLPQNLVCKSPQPSNISQPVQGASPVTHTVAQTRHQSSKRPFPVLPPVTELPRNDRIQLAATALPAYSSYVSRLQRLVKLCTRKQQLDTDLFPHFGLDWSEDSGEEQEDSDQSSPYRTAWSFRESFRYDCKKLDIEEAHSRSSRIAQLCTYFQQKYKHLCRLERAESCQKKYRHTFRRALQQAAHRESETTGQLLQELRTTTCIRTRPIQPELRGTEVTLCSATISNGACRNRALPYTRNCFQHILSNSSQQLFSSCTAKFADGQQCSVPVFDITHQTPLCEEHAKKMDNFLRGDNSRKVQHHQQRKPRKKTKPPALTKKTKKKRRRGPRRPQKPIPPAVPQGNLCMPSSLSLPVEVSSIRSPSTPNLSTEELPDDITSEITDIPHDLELNQEDFSDVLPRLPDDLQDFDFFEGKNGDLLPTTEEAEELERALQAVTSLECLSSIAVLTQADNATGQDLSDRGISAFSTGSGGSVIQSLSREDHPDLGDLLNGHIGHNFASLELDENLLGSTTLSNPSATLSGHIQGQFSSPANVGLSSATLISRSGERLGREVMSHHVDAAAPILDKQRVSGALYSGMVKHSAEWV.

Disordered regions lie at residues 521–573 (NSRK…LCMP) and 581–600 (EVSS…ELPD). The segment covering 524–558 (KVQHHQQRKPRKKTKPPALTKKTKKKRRRGPRRPQ) has biased composition (basic residues). A compositionally biased stretch (polar residues) spans 585–595 (IRSPSTPNLST).

Belongs to the INO80D family. Component of the chromatin-remodeling INO80 complex.

It localises to the nucleus. In terms of biological role, putative regulatory component of the chromatin remodeling INO80 complex which is involved in transcriptional regulation, DNA replication and probably DNA repair. The polypeptide is INO80 complex subunit D (Xenopus laevis (African clawed frog)).